The sequence spans 1007 residues: Calmodulin-binding transcription activator 1 (1007 aa).

The CG-1 DNA-binding region spans 18–144; the sequence is MEQLLSEAQH…YLEVKGNRTS (127 aa). Positions 148-164 are enriched in polar residues; it reads KENNSNSVNGTASVNID. The interval 148-227 is disordered; the sequence is KENNSNSVNG…VHGNRVRESD (80 aa). Positions 165-176 are enriched in low complexity; the sequence is STASPTSTLSSL. The span at 183–202 shows a compositional bias: polar residues; that stretch reads GDSQQASSVLRPSPEPQTGN. Positions 233-398 are transcription activation; that stretch reads DVRALDTVGN…TVECETAAAG (166 aa). ANK repeat units follow at residues 612 to 641 and 645 to 674; these read DGQGILHFVAALGYDWAIKPVLAAGVNINF and NGWSALHWAAFSGREETVAVLVSLGADAGA. IQ domains follow at residues 821-850 and 844-873; these read LSCAATHIQKKYRGWKKRKEFLLIRQRIVK and IRQRIVKIQAHVRGHQVRKQYRTVIWSVGL. The interval 869-891 is calmodulin-binding; the sequence is WSVGLLEKIILRWRRKGNGLRGF. A coiled-coil region spans residues 915-943; it reads QEDEYDYLKEGRKQTEERLQKALTRVKSM. Phosphoserine is present on S942.

It belongs to the CAMTA family. In terms of tissue distribution, expressed in roots, stems, leaves, pollen and siliques.

Its subcellular location is the nucleus. Its function is as follows. Transcription activator that binds calmodulin in a calcium-dependent manner in vitro. Binds to the DNA consensus sequence 5'-[ACG]CGCG[GTC]-3'. Regulates transcriptional activity in response to calcium signals. Involved in freezing tolerance. Involved in freezing tolerance in association with CAMTA2 and CAMTA3. Contributes together with CAMTA2 and CAMTA3 to the positive regulation of the cold-induced expression of DREB1A/CBF3, DREB1B/CBF1 and DREB1C/CBF2. Involved in drought stress responses by regulating several drought-responsive genes. Involved in auxin signaling and responses to abiotic stresses. Activates the expression of the V-PPase proton pump AVP1 in pollen. The protein is Calmodulin-binding transcription activator 1 of Arabidopsis thaliana (Mouse-ear cress).